The chain runs to 154 residues: 6,7-dimethyl-8-ribityllumazine synthase (154 aa).

Residues phenylalanine 23, 57 to 59 (AFE), and 81 to 83 (AVI) each bind 5-amino-6-(D-ribitylamino)uracil. 86 to 87 (AT) contacts (2S)-2-hydroxy-3-oxobutyl phosphate. The active-site Proton donor is the histidine 89. Phenylalanine 114 provides a ligand contact to 5-amino-6-(D-ribitylamino)uracil. Arginine 128 provides a ligand contact to (2S)-2-hydroxy-3-oxobutyl phosphate.

The protein belongs to the DMRL synthase family.

The catalysed reaction is (2S)-2-hydroxy-3-oxobutyl phosphate + 5-amino-6-(D-ribitylamino)uracil = 6,7-dimethyl-8-(1-D-ribityl)lumazine + phosphate + 2 H2O + H(+). Its pathway is cofactor biosynthesis; riboflavin biosynthesis; riboflavin from 2-hydroxy-3-oxobutyl phosphate and 5-amino-6-(D-ribitylamino)uracil: step 1/2. In terms of biological role, catalyzes the formation of 6,7-dimethyl-8-ribityllumazine by condensation of 5-amino-6-(D-ribitylamino)uracil with 3,4-dihydroxy-2-butanone 4-phosphate. This is the penultimate step in the biosynthesis of riboflavin. The polypeptide is 6,7-dimethyl-8-ribityllumazine synthase (Nautilia profundicola (strain ATCC BAA-1463 / DSM 18972 / AmH)).